Here is a 478-residue protein sequence, read N- to C-terminus: Zinc metalloproteinase/disintegrin (478 aa).

Residues 1 to 20 form the signal peptide; it reads MIQVLLVTICLAAFPYQGSS. Positions 21–187 are excised as a propeptide; that stretch reads IILESGNVND…PIKKASHLNL (167 aa). Positions 193 to 389 constitute a Peptidase M12B domain; that stretch reads RYVEIVIVVD…QKPQCILKKP (197 aa). Disulfide bonds link Cys-304-Cys-384, Cys-344-Cys-368, and Cys-346-Cys-351. His-329 provides a ligand contact to Zn(2+). Glu-330 is an active-site residue. Residues His-333 and His-339 each contribute to the Zn(2+) site. Residues 390-408 constitute a propeptide that is removed on maturation; sequence LRTDTVSTPVSGNELLEAR. The Disintegrin domain occupies 397–478; the sequence is TPVSGNELLE…ADCPRNVLYG (82 aa). 6 disulfide bridges follow: Cys-411-Cys-420, Cys-413-Cys-421, Cys-426-Cys-440, Cys-434-Cys-464, Cys-439-Cys-443, and Cys-452-Cys-471. A propeptide spanning residues 474 to 478 is cleaved from the precursor; it reads NVLYG.

The protein belongs to the venom metalloproteinase (M12B) family. P-II subfamily. P-IIa sub-subfamily. Zn(2+) is required as a cofactor. In terms of tissue distribution, expressed by the venom gland.

The protein localises to the secreted. Its function is as follows. Snake venom zinc metalloproteinase that causes hemorrhage by provoking the degradation of the sub-endothelial matrix proteins (fibronectin, laminin, type IV collagen, nidogen, and gelatins). Functionally, displays low cytotoxicity. In vitro, inhibits cancer cell migration (human breast cancer cell line MDA-MB-231) with a significant rate after 24 hours of incubation. The polypeptide is Zinc metalloproteinase/disintegrin (MPII) (Crotalus durissus collilineatus (Brazilian rattlesnake)).